The primary structure comprises 510 residues: Probable cytochrome P450 4aa1 (510 aa).

Cys450 contacts heme.

The protein belongs to the cytochrome P450 family. It depends on heme as a cofactor.

Its subcellular location is the endoplasmic reticulum membrane. The protein resides in the microsome membrane. In terms of biological role, may be involved in the metabolism of insect hormones and in the breakdown of synthetic insecticides. The polypeptide is Probable cytochrome P450 4aa1 (Cyp4aa1) (Drosophila melanogaster (Fruit fly)).